The chain runs to 235 residues: Type II secretion system protein N (235 aa).

Residues 1–34 (MIPRRSSDITIKTRSDVLPFSGASSRWLQRYAPA) lie on the Cytoplasmic side of the membrane. Residues 35–55 (LLAVALIIAMSISLAWQAAGW) traverse the membrane as a helical; Signal-anchor for type II membrane protein segment. Residues 56-235 (LRLQRSPVAV…EPTTTPTESD (180 aa)) lie on the Periplasmic side of the membrane. The segment at 205 to 235 (DALRQQMEATPIAEPAEEDSSEPTTTPTESD) is disordered. The segment covering 226-235 (EPTTTPTESD) has biased composition (low complexity).

It is found in the cell inner membrane. Its function is as follows. Involved in a type II secretion system (T2SS, formerly general secretion pathway, GSP) for the export of proteins. Required for the translocation of a variety of enzymes across the outer membrane. This chain is Type II secretion system protein N (xcpP), found in Pseudomonas aeruginosa (strain ATCC 15692 / DSM 22644 / CIP 104116 / JCM 14847 / LMG 12228 / 1C / PRS 101 / PAO1).